The following is a 546-amino-acid chain: Chaperonin GroEL (546 aa).

Residues 30–33 (TLGP), K51, 87–91 (DGTTT), G415, 479–481 (NAA), and D495 contribute to the ATP site. The interval 526 to 546 (KKGDSAPAGGGMGDMGGMGMM) is disordered. Residues 533 to 546 (AGGGMGDMGGMGMM) are compositionally biased toward gly residues.

Belongs to the chaperonin (HSP60) family. In terms of assembly, forms a cylinder of 14 subunits composed of two heptameric rings stacked back-to-back. Interacts with the co-chaperonin GroES.

The protein localises to the cytoplasm. It catalyses the reaction ATP + H2O + a folded polypeptide = ADP + phosphate + an unfolded polypeptide.. Its function is as follows. Together with its co-chaperonin GroES, plays an essential role in assisting protein folding. The GroEL-GroES system forms a nano-cage that allows encapsulation of the non-native substrate proteins and provides a physical environment optimized to promote and accelerate protein folding. In Thioalkalivibrio sulfidiphilus (strain HL-EbGR7), this protein is Chaperonin GroEL.